A 166-amino-acid chain; its full sequence is Ribosome maturation factor RimM (166 aa).

The 73-residue stretch at 91–163 (DDGFYDHELE…TCVITPPEGL (73 aa)) folds into the PRC barrel domain.

The protein belongs to the RimM family. As to quaternary structure, binds ribosomal protein uS19.

It is found in the cytoplasm. In terms of biological role, an accessory protein needed during the final step in the assembly of 30S ribosomal subunit, possibly for assembly of the head region. Essential for efficient processing of 16S rRNA. May be needed both before and after RbfA during the maturation of 16S rRNA. It has affinity for free ribosomal 30S subunits but not for 70S ribosomes. The polypeptide is Ribosome maturation factor RimM (Corynebacterium diphtheriae (strain ATCC 700971 / NCTC 13129 / Biotype gravis)).